The sequence spans 145 residues: Copper transporter 4 (145 aa).

Helical transmembrane passes span 53 to 73 (GMYALALIFVFFLAFLAEWLA) and 106 to 126 (YLVILAVVSFNGGVFLAAIFG).

It belongs to the copper transporter (Ctr) (TC 1.A.56) family. SLC31A subfamily. As to expression, highly expressed in roots and at lower levels in leaves, stems and flowers.

It is found in the membrane. Functionally, involved in the transport of copper. The polypeptide is Copper transporter 4 (COPT4) (Arabidopsis thaliana (Mouse-ear cress)).